A 230-amino-acid chain; its full sequence is Orotidine 5'-phosphate decarboxylase (230 aa).

Residues Asp11, Lys34, 61–70, Thr117, Arg179, Gln188, Gly208, and Arg209 each bind substrate; that span reads DLKLHDIPNT. Lys63 serves as the catalytic Proton donor.

This sequence belongs to the OMP decarboxylase family. Type 1 subfamily. Homodimer.

The enzyme catalyses orotidine 5'-phosphate + H(+) = UMP + CO2. It participates in pyrimidine metabolism; UMP biosynthesis via de novo pathway; UMP from orotate: step 2/2. In terms of biological role, catalyzes the decarboxylation of orotidine 5'-monophosphate (OMP) to uridine 5'-monophosphate (UMP). The protein is Orotidine 5'-phosphate decarboxylase of Streptococcus uberis (strain ATCC BAA-854 / 0140J).